The chain runs to 394 residues: NAD(P)H-quinone oxidoreductase subunit H (394 aa).

The protein belongs to the complex I 49 kDa subunit family. As to quaternary structure, NDH-1 can be composed of about 15 different subunits; different subcomplexes with different compositions have been identified which probably have different functions.

It is found in the cellular thylakoid membrane. The enzyme catalyses a plastoquinone + NADH + (n+1) H(+)(in) = a plastoquinol + NAD(+) + n H(+)(out). It carries out the reaction a plastoquinone + NADPH + (n+1) H(+)(in) = a plastoquinol + NADP(+) + n H(+)(out). NDH-1 shuttles electrons from an unknown electron donor, via FMN and iron-sulfur (Fe-S) centers, to quinones in the respiratory and/or the photosynthetic chain. The immediate electron acceptor for the enzyme in this species is believed to be plastoquinone. Couples the redox reaction to proton translocation, and thus conserves the redox energy in a proton gradient. Cyanobacterial NDH-1 also plays a role in inorganic carbon-concentration. This chain is NAD(P)H-quinone oxidoreductase subunit H, found in Nostoc punctiforme (strain ATCC 29133 / PCC 73102).